The primary structure comprises 390 residues: MAAQKDLWDAIVIGAGIQGCFTAYHLAKHRKRILLLEQFFLPHSRGSSHGQSRIIRKAYLEDFYTRMMHECYQIWAQLEHEAGTQLHRQTGLLLLGMKENQELKTIQANLSRQRVEHQCLSSEELKQRFPNIRLPRGEVGLLDNSGGVIYAYKALRALQDAIRQLGGIVRDGEKVVEINPGLLVTVKTTSRSYQAKSLVITAGPWTNQLLRPLGIEMPLQTLRINVCYWREMVPGSYGVSQAFPCFLWLGLCPHHIYGLPTGEYPGLMKVSYHHGNHADPEERDCPTARTDIGDVQILSSFVRDHLPDLKPEPAVIESCMYTNTPDEQFILDRHPKYDNIVIGAGFSGHGFKLAPVVGKILYELSMKLTPSYDLAPFRISRFPSLGKAHL.

Residue 9–39 (DAIVIGAGIQGCFTAYHLAKHRKRILLLEQF) participates in FAD binding. Lysine 126 carries the post-translational modification N6-acetyllysine. The residue at position 319 (cysteine 319) is an S-8alpha-FAD cysteine. Residues 388 to 390 (AHL) carry the Microbody targeting signal motif.

It belongs to the MSOX/MTOX family. FAD is required as a cofactor. In terms of tissue distribution, expressed in the liver and kidney.

The protein resides in the peroxisome. It catalyses the reaction sarcosine + O2 + H2O = formaldehyde + glycine + H2O2. It carries out the reaction L-pipecolate + O2 = L-1-piperideine-6-carboxylate + H2O2 + H(+). Metabolizes sarcosine and L-pipecolic acid. This Homo sapiens (Human) protein is Peroxisomal sarcosine oxidase (PIPOX).